Here is a 500-residue protein sequence, read N- to C-terminus: Potassium voltage-gated channel subfamily V member 1 (500 aa).

Residues 1-210 (MPSSGRALLD…EKPGSSTAAR (210 aa)) are Cytoplasmic-facing. A compositionally biased stretch (basic and acidic residues) spans 168–181 (KKDTEDQESQHESE). Positions 168–189 (KKDTEDQESQHESEQDFSQGPC) are disordered. A helical membrane pass occupies residues 211–231 (IFGVISIIFVVVSIINMALMS). The Extracellular portion of the chain corresponds to 232 to 238 (AELSWLD). A helical transmembrane segment spans residues 239–259 (LQLLEILEYVCISWFTGEFVL). At 260 to 276 (RFLCVRDRCRFLRKVPN) the chain is on the cytoplasmic side. The chain crosses the membrane as a helical span at residues 277-297 (IIDLLAILPFYITLLVESLSG). Topologically, residues 298–309 (SQTTQELENVGR) are extracellular. The chain crosses the membrane as a helical; Voltage-sensor span at residues 310 to 331 (IVQVLRLLRALRMLKLGRHSTG). The Cytoplasmic portion of the chain corresponds to 332-345 (LRSLGMTITQCYEE). Residues 346 to 366 (VGLLLLFLSVGISIFSTVEYF) traverse the membrane as a helical segment. The short motif at 392–397 (TVGYGD) is the Selectivity filter element. Residues 407–427 (IVAFMCILSGILVLALPIAII) traverse the membrane as a helical segment. Residues 428-500 (NDRFSACYFT…RSSGGDDFWF (73 aa)) lie on the Cytoplasmic side of the membrane.

It belongs to the potassium channel family. V (TC 1.A.1.2) subfamily. Kv8.1/KCNV1 sub-subfamily. Heteromultimer with KCNB1 and KCNB2. Interacts with KCNC4 and KCND1. In terms of tissue distribution, detected in brain.

The protein localises to the cell membrane. Its function is as follows. Potassium channel subunit that does not form functional channels by itself. Modulates KCNB1 and KCNB2 channel activity by shifting the threshold for inactivation to more negative values and by slowing the rate of inactivation. Can down-regulate the channel activity of KCNB1, KCNB2, KCNC4 and KCND1, possibly by trapping them in intracellular membranes. This Homo sapiens (Human) protein is Potassium voltage-gated channel subfamily V member 1 (KCNV1).